A 478-amino-acid chain; its full sequence is 3-isopropylmalate dehydratase large subunit (478 aa).

Residues cysteine 359, cysteine 420, and cysteine 423 each coordinate [4Fe-4S] cluster.

It belongs to the aconitase/IPM isomerase family. LeuC type 1 subfamily. In terms of assembly, heterodimer of LeuC and LeuD. [4Fe-4S] cluster is required as a cofactor.

It carries out the reaction (2R,3S)-3-isopropylmalate = (2S)-2-isopropylmalate. The protein operates within amino-acid biosynthesis; L-leucine biosynthesis; L-leucine from 3-methyl-2-oxobutanoate: step 2/4. Functionally, catalyzes the isomerization between 2-isopropylmalate and 3-isopropylmalate, via the formation of 2-isopropylmaleate. This Psychrobacter sp. (strain PRwf-1) protein is 3-isopropylmalate dehydratase large subunit.